The following is a 425-amino-acid chain: Serine hydroxymethyltransferase (425 aa).

Residues L128 and 132–134 (GHL) each bind (6S)-5,6,7,8-tetrahydrofolate. K237 is subject to N6-(pyridoxal phosphate)lysine.

This sequence belongs to the SHMT family. Homodimer. It depends on pyridoxal 5'-phosphate as a cofactor.

It localises to the cytoplasm. It catalyses the reaction (6R)-5,10-methylene-5,6,7,8-tetrahydrofolate + glycine + H2O = (6S)-5,6,7,8-tetrahydrofolate + L-serine. Its pathway is one-carbon metabolism; tetrahydrofolate interconversion. The protein operates within amino-acid biosynthesis; glycine biosynthesis; glycine from L-serine: step 1/1. Its function is as follows. Catalyzes the reversible interconversion of serine and glycine with tetrahydrofolate (THF) serving as the one-carbon carrier. This reaction serves as the major source of one-carbon groups required for the biosynthesis of purines, thymidylate, methionine, and other important biomolecules. Also exhibits THF-independent aldolase activity toward beta-hydroxyamino acids, producing glycine and aldehydes, via a retro-aldol mechanism. This Wolbachia sp. subsp. Drosophila simulans (strain wRi) protein is Serine hydroxymethyltransferase.